The chain runs to 463 residues: Aromatic amino acid transport protein AroP (463 aa).

Helical transmembrane passes span T18–I38, A40–M60, F84–M104, A117–V137, V157–G177, V200–A220, A237–M257, I276–A296, A337–A357, G358–I378, A402–L422, and V431–S451.

Belongs to the amino acid-polyamine-organocation (APC) superfamily. Amino acid transporter (AAT) (TC 2.A.3.1) family.

The protein localises to the cell membrane. The catalysed reaction is L-phenylalanine(in) + H(+)(in) = L-phenylalanine(out) + H(+)(out). It carries out the reaction L-tryptophan(in) + H(+)(in) = L-tryptophan(out) + H(+)(out). It catalyses the reaction L-tyrosine(in) + H(+)(in) = L-tyrosine(out) + H(+)(out). Its function is as follows. Permease that is involved in the active transport across the cytoplasmic membrane of all three aromatic amino acids, phenylalanine, tyrosine and tryptophan. This Corynebacterium glutamicum (strain ATCC 13032 / DSM 20300 / JCM 1318 / BCRC 11384 / CCUG 27702 / LMG 3730 / NBRC 12168 / NCIMB 10025 / NRRL B-2784 / 534) protein is Aromatic amino acid transport protein AroP.